Here is a 453-residue protein sequence, read N- to C-terminus: Ribosomal protein uS12 methylthiotransferase RimO (453 aa).

The region spanning 3–118 (KKVGIISLGC…IAKVIEEFYS (116 aa)) is the MTTase N-terminal domain. Cys12, Cys48, Cys81, Cys162, Cys166, and Cys169 together coordinate [4Fe-4S] cluster. The region spanning 148 to 378 (STNSGYAYLK…MQLQKEIVQR (231 aa)) is the Radical SAM core domain. One can recognise a TRAM domain in the interval 381–449 (ESRLEKVYKT…DYDLIGEVIN (69 aa)).

Belongs to the methylthiotransferase family. RimO subfamily. [4Fe-4S] cluster is required as a cofactor.

It localises to the cytoplasm. It carries out the reaction L-aspartate(89)-[ribosomal protein uS12]-hydrogen + (sulfur carrier)-SH + AH2 + 2 S-adenosyl-L-methionine = 3-methylsulfanyl-L-aspartate(89)-[ribosomal protein uS12]-hydrogen + (sulfur carrier)-H + 5'-deoxyadenosine + L-methionine + A + S-adenosyl-L-homocysteine + 2 H(+). Functionally, catalyzes the methylthiolation of an aspartic acid residue of ribosomal protein uS12. The protein is Ribosomal protein uS12 methylthiotransferase RimO of Acetivibrio thermocellus (strain ATCC 27405 / DSM 1237 / JCM 9322 / NBRC 103400 / NCIMB 10682 / NRRL B-4536 / VPI 7372) (Clostridium thermocellum).